The primary structure comprises 406 residues: Phosphopentomutase (406 aa).

Mn(2+)-binding residues include aspartate 10, aspartate 305, histidine 310, aspartate 346, histidine 347, and histidine 358.

It belongs to the phosphopentomutase family. Requires Mn(2+) as cofactor.

The protein localises to the cytoplasm. The catalysed reaction is 2-deoxy-alpha-D-ribose 1-phosphate = 2-deoxy-D-ribose 5-phosphate. It catalyses the reaction alpha-D-ribose 1-phosphate = D-ribose 5-phosphate. Its pathway is carbohydrate degradation; 2-deoxy-D-ribose 1-phosphate degradation; D-glyceraldehyde 3-phosphate and acetaldehyde from 2-deoxy-alpha-D-ribose 1-phosphate: step 1/2. Functionally, isomerase that catalyzes the conversion of deoxy-ribose 1-phosphate (dRib-1-P) and ribose 1-phosphate (Rib-1-P) to deoxy-ribose 5-phosphate (dRib-5-P) and ribose 5-phosphate (Rib-5-P), respectively. This Aliivibrio salmonicida (strain LFI1238) (Vibrio salmonicida (strain LFI1238)) protein is Phosphopentomutase.